Consider the following 613-residue polypeptide: 4-hydroxy-3-methylbut-2-en-1-yl diphosphate synthase (flavodoxin) (613 aa).

Residues Cys-521, Cys-524, Cys-555, and Glu-562 each coordinate [4Fe-4S] cluster.

Belongs to the IspG family. The cofactor is [4Fe-4S] cluster.

The catalysed reaction is (2E)-4-hydroxy-3-methylbut-2-enyl diphosphate + oxidized [flavodoxin] + H2O + 2 H(+) = 2-C-methyl-D-erythritol 2,4-cyclic diphosphate + reduced [flavodoxin]. It participates in isoprenoid biosynthesis; isopentenyl diphosphate biosynthesis via DXP pathway; isopentenyl diphosphate from 1-deoxy-D-xylulose 5-phosphate: step 5/6. In terms of biological role, converts 2C-methyl-D-erythritol 2,4-cyclodiphosphate (ME-2,4cPP) into 1-hydroxy-2-methyl-2-(E)-butenyl 4-diphosphate. The polypeptide is 4-hydroxy-3-methylbut-2-en-1-yl diphosphate synthase (flavodoxin) (Bacteroides thetaiotaomicron (strain ATCC 29148 / DSM 2079 / JCM 5827 / CCUG 10774 / NCTC 10582 / VPI-5482 / E50)).